A 672-amino-acid chain; its full sequence is NADPH-Fe(3+) oxidoreductase subunit beta (672 aa).

4 residues coordinate [4Fe-4S] cluster: cysteine 203, cysteine 207, cysteine 211, and cysteine 215. 254–283 serves as a coordination point for FAD; sequence KKVAIVGAGPAGLACAYYLALEGYPCTIYE. 388-421 contributes to the NADP(+) binding site; the sequence is GKKVVVVGGGNTAIDCVRVALREGAEESTLLYRR. 552–562 serves as a coordination point for FAD; it reads TDLEGVFAGGD.

As to quaternary structure, heterotetramer with 2 alpha subunits. The cofactor is [4Fe-4S] cluster. Requires FAD as cofactor.

It is found in the cell membrane. In terms of biological role, probably involved in acetate metabolism and not in the reduction of Fe(3+) chelates. May serve as a major route for NADP regeneration. This Geobacter sulfurreducens (strain DL-1 / KN400) protein is NADPH-Fe(3+) oxidoreductase subunit beta (sfrB).